We begin with the raw amino-acid sequence, 416 residues long: S-adenosylmethionine synthase (416 aa).

His16 is a binding site for ATP. Asp18 contributes to the Mg(2+) binding site. K(+) is bound at residue Glu44. The L-methionine site is built by Glu57 and Gln100. A flexible loop region spans residues 100–110; sequence QSPDISQGVTA. ATP-binding positions include 175–177, 251–252, Asp260, 266–267, Ala283, and Lys287; these read DGK, KF, and RK. L-methionine is bound at residue Asp260. Position 291 (Lys291) interacts with L-methionine.

It belongs to the AdoMet synthase family. Homotetramer; dimer of dimers. It depends on Mg(2+) as a cofactor. Requires K(+) as cofactor.

It is found in the cytoplasm. The catalysed reaction is L-methionine + ATP + H2O = S-adenosyl-L-methionine + phosphate + diphosphate. Its pathway is amino-acid biosynthesis; S-adenosyl-L-methionine biosynthesis; S-adenosyl-L-methionine from L-methionine: step 1/1. Its function is as follows. Catalyzes the formation of S-adenosylmethionine (AdoMet) from methionine and ATP. The overall synthetic reaction is composed of two sequential steps, AdoMet formation and the subsequent tripolyphosphate hydrolysis which occurs prior to release of AdoMet from the enzyme. The polypeptide is S-adenosylmethionine synthase (Microcystis aeruginosa (strain NIES-843 / IAM M-2473)).